A 158-amino-acid polypeptide reads, in one-letter code: MRFKNRLFWIAAFIAFFVDQLTKYWVVQTFSLGETLPILPGIFHFTYVTNTGAAFSLFSGKVEWLRWLSLGVSLLLIGLALLGPVLDRWDQLGYGLILGGAMGNGIDRFALGYVVDFLDFRLINFAVFNMADSFISIGIVCLLLASLQKPPSSHHRPR.

4 helical membrane-spanning segments follow: residues 7 to 27, 38 to 58, 67 to 87, and 95 to 115; these read LFWIAAFIAFFVDQLTKYWVV, ILPGIFHFTYVTNTGAAFSLF, WLSLGVSLLLIGLALLGPVLD, and GLILGGAMGNGIDRFALGYVV. Residues aspartate 116 and aspartate 132 contribute to the active site. The chain crosses the membrane as a helical span at residues 125 to 145; the sequence is FAVFNMADSFISIGIVCLLLA.

The protein belongs to the peptidase A8 family.

The protein resides in the cell inner membrane. The enzyme catalyses Release of signal peptides from bacterial membrane prolipoproteins. Hydrolyzes -Xaa-Yaa-Zaa-|-(S,diacylglyceryl)Cys-, in which Xaa is hydrophobic (preferably Leu), and Yaa (Ala or Ser) and Zaa (Gly or Ala) have small, neutral side chains.. The protein operates within protein modification; lipoprotein biosynthesis (signal peptide cleavage). Its function is as follows. This protein specifically catalyzes the removal of signal peptides from prolipoproteins. The sequence is that of Lipoprotein signal peptidase from Nostoc sp. (strain PCC 7120 / SAG 25.82 / UTEX 2576).